Reading from the N-terminus, the 596-residue chain is Chaperone protein DnaK (596 aa).

T174 bears the Phosphothreonine; by autocatalysis mark. The tract at residues 576 to 596 (ANATKDQSSKDQEEVATVVEE) is disordered.

Belongs to the heat shock protein 70 family.

Its function is as follows. Acts as a chaperone. This Mycoplasmopsis synoviae (strain 53) (Mycoplasma synoviae) protein is Chaperone protein DnaK.